The sequence spans 155 residues: Aspartate carbamoyltransferase regulatory chain (155 aa).

C113, C118, C139, and C142 together coordinate Zn(2+).

The protein belongs to the PyrI family. In terms of assembly, contains catalytic and regulatory chains. Requires Zn(2+) as cofactor.

Functionally, involved in allosteric regulation of aspartate carbamoyltransferase. The chain is Aspartate carbamoyltransferase regulatory chain from Methanosphaerula palustris (strain ATCC BAA-1556 / DSM 19958 / E1-9c).